The following is a 187-amino-acid chain: Ribosome maturation factor RimM (187 aa).

Polar residues predominate over residues 1-17; sequence MTSTPSPSTADPNSTND. The segment at 1–21 is disordered; sequence MTSTPSPSTADPNSTNDWLPV. A PRC barrel domain is found at 111–184; sequence EGEFHLLDLV…WLLLTPPPGL (74 aa).

Belongs to the RimM family. Binds ribosomal protein uS19.

It localises to the cytoplasm. In terms of biological role, an accessory protein needed during the final step in the assembly of 30S ribosomal subunit, possibly for assembly of the head region. Essential for efficient processing of 16S rRNA. May be needed both before and after RbfA during the maturation of 16S rRNA. It has affinity for free ribosomal 30S subunits but not for 70S ribosomes. In Synechococcus sp. (strain CC9311), this protein is Ribosome maturation factor RimM.